We begin with the raw amino-acid sequence, 508 residues long: ATP synthase subunit alpha, mitochondrial (508 aa).

171 to 178 (GDRQTGKT) contacts ATP.

The protein belongs to the ATPase alpha/beta chains family. In terms of assembly, F-type ATPases have 2 components, CF(1) - the catalytic core - and CF(0) - the membrane proton channel. CF(1) has five subunits: alpha(3), beta(3), gamma(1), delta(1), epsilon(1). CF(0) has three main subunits: a, b and c.

The protein localises to the mitochondrion. It localises to the mitochondrion inner membrane. Its function is as follows. Mitochondrial membrane ATP synthase (F(1)F(0) ATP synthase or Complex V) produces ATP from ADP in the presence of a proton gradient across the membrane which is generated by electron transport complexes of the respiratory chain. F-type ATPases consist of two structural domains, F(1) - containing the extramembraneous catalytic core, and F(0) - containing the membrane proton channel, linked together by a central stalk and a peripheral stalk. During catalysis, ATP synthesis in the catalytic domain of F(1) is coupled via a rotary mechanism of the central stalk subunits to proton translocation. Subunits alpha and beta form the catalytic core in F(1). Rotation of the central stalk against the surrounding alpha(3)beta(3) subunits leads to hydrolysis of ATP in three separate catalytic sites on the beta subunits. Subunit alpha does not bear the catalytic high-affinity ATP-binding sites. The chain is ATP synthase subunit alpha, mitochondrial (ATPA) from Phaseolus vulgaris (Kidney bean).